We begin with the raw amino-acid sequence, 552 residues long: Outer dynein arm protein 1 (552 aa).

A disordered region spans residues 1-27 (MPSADATRGGGSAGSMGKGTLGAGDTL). Residues 8-22 (RGGGSAGSMGKGTLG) are compositionally biased toward gly residues. Coiled coils occupy residues 28–59 (GHKS…LENK), 120–260 (SAKE…QELL), and 331–395 (TLFN…YEKR). 2 disordered regions span residues 482–515 (NRII…TREH) and 528–552 (LETA…PTRR). Residues 493–506 (QEEEVEGLEPEPVE) show a composition bias toward acidic residues.

Belongs to the ODA1/DCC2 family. In terms of assembly, component of the outer dynein arm complex.

It localises to the cytoplasm. The protein resides in the cytoskeleton. Its subcellular location is the cilium axoneme. Functionally, component of the outer dynein arm complex required for assembly of the outer dynein arm-docking complex (ODA-DC) and the outer dynein arm onto the doublet microtubule. The chain is Outer dynein arm protein 1 (ODA1) from Chlamydomonas reinhardtii (Chlamydomonas smithii).